The following is a 487-amino-acid chain: Melanopsin (487 aa).

The segment at 1–37 (MNPPSGPRTQEPSCVATPASPSRWDGYRSSTSSLDQP) is disordered. The Extracellular segment spans residues 1–67 (MNPPSGPRTQ…VDVPDHAHYT (67 aa)). A helical transmembrane segment spans residues 68–88 (LGTVILLVGLTGILGNLMVIY). The Cytoplasmic portion of the chain corresponds to 89 to 102 (TFCRSRGLRTPANM). Residues 103–123 (FIINLAVSDFFMSFTQAPVFF) traverse the membrane as a helical segment. Over 124-139 (ASSLHKRWLFGEAGCE) the chain is Extracellular. C138 and C216 form a disulfide bridge. Residues 140 to 160 (FYAFCGALFGITSMITLMAIA) form a helical membrane-spanning segment. Residues 161-183 (LDRYLVITHPLATIGVVSKRRAA) are Cytoplasmic-facing. Residues 184-204 (LVLLGVWLYALAWSLPPFFGW) traverse the membrane as a helical segment. Topologically, residues 205-233 (SAYVPEGLLTSCSWDYMSFTPSVRAYTML) are extracellular. The helical transmembrane segment at 234-254 (LFCFVFFLPLLVIVYCYIFIF) threads the bilayer. The Cytoplasmic segment spans residues 255–291 (RAIRETGQALQTFRACEGGGRSPRQRQRLQREWKMAK). Residues 292 to 312 (IELLVILLFVLSWAPYSIVAL) form a helical membrane-spanning segment. Topologically, residues 313 to 327 (MAFAGYAHVLTPYMN) are extracellular. Residues 328–348 (SVPAVIAKASAIHNPIIYAIT) form a helical membrane-spanning segment. At K335 the chain carries N6-(retinylidene)lysine. The Cytoplasmic segment spans residues 349 to 487 (HPKYRMAIAQ…LPLHPGWAFH (139 aa)). A disordered region spans residues 436 to 459 (CSQGLEDREAKAPVRPQGREAETP). Basic and acidic residues predominate over residues 440 to 457 (LEDREAKAPVRPQGREAE).

The protein belongs to the G-protein coupled receptor 1 family. Opsin subfamily. In terms of tissue distribution, eye. Expression is restricted within the ganglion cell layer.

It localises to the cell membrane. The protein localises to the cell projection. The protein resides in the axon. It is found in the dendrite. Its subcellular location is the perikaryon. Functionally, photoreceptor that binds cis-retinaldehydes. Contributes to pupillar reflex, photoentrainment and other non-image forming responses to light. May be involved in the optokinetic visual tracking response. May be involved in the regulation of retinal hyaloid vessel growth and regression. This chain is Melanopsin (OPN4), found in Felis catus (Cat).